A 184-amino-acid polypeptide reads, in one-letter code: Cysteine-rich atrial secretory protein (184 aa).

The N-terminal stretch at 1 to 26 (MATFQAHFFAAVMCVGVLGLSKLCGA) is a signal peptide. Cystine bridges form between Cys-29–Cys-34, Cys-65–Cys-111, Cys-75–Cys-82, Cys-123–Cys-155, and Cys-135–Cys-144. Residue Asn-74 is glycosylated (N-linked (GlcNAc...) asparagine).

In terms of processing, N-glycosylated. In terms of tissue distribution, highly expressed in atrium. Moderately expressed in the pericardium, pulmonary vein, nephridium, arteria anterior, ovotestis and connective tissue. Low expression found in intestine, lung plexus, diaphragm, subesophageal ganglion, ventricle and digestive gland. Very low expression found in columellar retractor, pedal nerves and cerebral ganglion. Not expressed in hemocytes.

The protein localises to the secreted. The sequence is that of Cysteine-rich atrial secretory protein from Achatina achatina (Giant Ghana snail).